Here is a 429-residue protein sequence, read N- to C-terminus: Ribosomal RNA small subunit methyltransferase B (429 aa).

Residues 254-260, Asp-277, Asp-303, and Asp-322 each bind S-adenosyl-L-methionine; that span reads CAAPGGK. Catalysis depends on Cys-375, which acts as the Nucleophile.

The protein belongs to the class I-like SAM-binding methyltransferase superfamily. RsmB/NOP family.

It localises to the cytoplasm. The catalysed reaction is cytidine(967) in 16S rRNA + S-adenosyl-L-methionine = 5-methylcytidine(967) in 16S rRNA + S-adenosyl-L-homocysteine + H(+). Specifically methylates the cytosine at position 967 (m5C967) of 16S rRNA. This is Ribosomal RNA small subunit methyltransferase B from Escherichia fergusonii (strain ATCC 35469 / DSM 13698 / CCUG 18766 / IAM 14443 / JCM 21226 / LMG 7866 / NBRC 102419 / NCTC 12128 / CDC 0568-73).